The chain runs to 93 residues: Large ribosomal subunit protein eL42 (93 aa).

4 residues coordinate Zn(2+): cysteine 11, cysteine 14, cysteine 71, and cysteine 74. Residues 11–74 (CPYCKKHTSH…IALRLVCDEC (64 aa)) form a C4-type zinc finger.

Belongs to the eukaryotic ribosomal protein eL42 family. Part of the 50S ribosomal subunit. Zn(2+) serves as cofactor.

Functionally, binds to the 23S rRNA. In Thermoplasma acidophilum (strain ATCC 25905 / DSM 1728 / JCM 9062 / NBRC 15155 / AMRC-C165), this protein is Large ribosomal subunit protein eL42.